The sequence spans 198 residues: Na(+)-translocating NADH-quinone reductase subunit E (198 aa).

6 helical membrane passes run 11–31 (AVFI…FLAV), 39–59 (FGLG…NNLV), 77–97 (FLNF…LEMI), 109–129 (LGIF…VSFM), 140–160 (IVYG…LASI), and 176–196 (LGVT…FSGV).

Belongs to the NqrDE/RnfAE family. In terms of assembly, composed of six subunits; NqrA, NqrB, NqrC, NqrD, NqrE and NqrF.

The protein localises to the cell inner membrane. It catalyses the reaction a ubiquinone + n Na(+)(in) + NADH + H(+) = a ubiquinol + n Na(+)(out) + NAD(+). Its function is as follows. NQR complex catalyzes the reduction of ubiquinone-1 to ubiquinol by two successive reactions, coupled with the transport of Na(+) ions from the cytoplasm to the periplasm. NqrA to NqrE are probably involved in the second step, the conversion of ubisemiquinone to ubiquinol. In Proteus mirabilis (strain HI4320), this protein is Na(+)-translocating NADH-quinone reductase subunit E.